A 119-amino-acid polypeptide reads, in one-letter code: Large ribosomal subunit protein uL18 (119 aa).

The protein belongs to the universal ribosomal protein uL18 family. Part of the 50S ribosomal subunit; part of the 5S rRNA/L5/L18/L25 subcomplex. Contacts the 5S and 23S rRNAs.

This is one of the proteins that bind and probably mediate the attachment of the 5S RNA into the large ribosomal subunit, where it forms part of the central protuberance. The protein is Large ribosomal subunit protein uL18 of Clostridium tetani (strain Massachusetts / E88).